Consider the following 264-residue polypeptide: Claudin-18 (264 aa).

Residues 1–6 are Cytoplasmic-facing; sequence MATTTC. A helical transmembrane segment spans residues 7–27; that stretch reads QVVGLLLSLLGLAGCIAATGM. Residues 28–80 are Extracellular-facing; it reads DMWSTQDLYDNPVTAVFQYEGLWRSCVQQSSGFTECRPYFTILGLPAMLQAVR. A helical membrane pass occupies residues 81-101; sequence ALMIVGIVLGVIGILVSIFAL. Residues 102–122 lie on the Cytoplasmic side of the membrane; that stretch reads KCIRIGSMDDSAKAKMTLTSG. The chain crosses the membrane as a helical span at residues 123–143; sequence ILFIISGICAIIGVSVFANML. Residues 144–176 are Extracellular-facing; it reads VTNFWMSTANMYSGMGGMGGMVQTVQTRYTFGA. A helical transmembrane segment spans residues 177 to 197; the sequence is ALFVGWVAGGLTLIGGVMMCI. The Cytoplasmic portion of the chain corresponds to 198-264; it reads ACRGLTPDDS…QSHPTKYDYV (67 aa). Residues 198–264 form a required for role in regulation of RANKL-induced osteoclast differentiation region; it reads ACRGLTPDDS…QSHPTKYDYV (67 aa). Phosphoserine is present on serine 217. The interval 241–264 is disordered; that stretch reads KKIYDGGARTEDDEQSHPTKYDYV. The segment covering 242–264 has biased composition (basic and acidic residues); that stretch reads KIYDGGARTEDDEQSHPTKYDYV.

The protein belongs to the claudin family. In terms of assembly, interacts with TJP2/ZO-2. Interacts with TJP1/ZO-1. Interacts with YAP1 (phosphorylated); the interaction sequesters YAP1 away from the nucleus and thereby restricts transcription of YAP1 target genes. Interacts with CLDN19. Expressed in the lung (at protein level). In terms of tissue distribution, expressed in lung. Expressed in the stomach. As to expression, expressed in lung. Expressed in stomach. Expressed in bone. In terms of tissue distribution, expressed in stomach.

The protein resides in the cell junction. The protein localises to the tight junction. Its subcellular location is the cell membrane. It is found in the lateral cell membrane. In terms of biological role, involved in alveolar fluid homeostasis via regulation of alveolar epithelial tight junction composition and therefore ion transport and solute permeability, potentially via downstream regulation of the actin cytoskeleton organization and beta-2-adrenergic signaling. Required for lung alveolarization and maintenance of the paracellular alveolar epithelial barrier. Acts to maintain epithelial progenitor cell proliferation and organ size, via regulation of YAP1 localization away from the nucleus and thereby restriction of YAP1 target gene transcription. Acts as a negative regulator of RANKL-induced osteoclast differentiation, potentially via relocation of TJP2/ZO-2 away from the nucleus, subsequently involved in bone resorption in response to calcium deficiency. Mediates the osteoprotective effects of estrogen, potentially via acting downstream of estrogen signaling independently of RANKL signaling pathways. Functionally, involved in the maintenance of homeostasis of the alveolar microenvironment via regulation of pH and subsequent T-cell activation in the alveolar space, is therefore indirectly involved in limiting C.neoformans infection. Required for the formation of the gastric paracellular barrier via its role in tight junction formation, thereby involved in the response to gastric acidification. The chain is Claudin-18 (Cldn18) from Mus musculus (Mouse).